Reading from the N-terminus, the 585-residue chain is ADP-ribosylation factor-binding protein GGA2 (585 aa).

Positions Ala33–Pro169 constitute a VHS domain. Residues Lys180 and Lys287 each participate in a glycyl lysine isopeptide (Lys-Gly) (interchain with G-Cter in ubiquitin) cross-link. One can recognise a GAT domain in the interval Glu196 to Asn321. The disordered stretch occupies residues Leu358–Ala378. Positions Gly365 to Thr374 are enriched in low complexity. The GAE domain maps to Thr466–Thr581.

In terms of assembly, binds to ARF1 and ARF2.

Its subcellular location is the golgi apparatus. It is found in the trans-Golgi network. May play a role in the regulation of membrane traffic through the trans-Golgi network. This Saccharomyces cerevisiae (strain ATCC 204508 / S288c) (Baker's yeast) protein is ADP-ribosylation factor-binding protein GGA2 (GGA2).